We begin with the raw amino-acid sequence, 328 residues long: Extracellular exo-alpha-(1-&gt;5)-L-arabinofuranosidase (328 aa).

Positions 1 to 43 form a signal peptide, tat-tyPE signal; that stretch reads MCTREAVRMSREHDLPEIPSRRLLLKGAAAAGALTAVPGVAHA. Asp60 acts as the Proton acceptor in catalysis. The active-site Proton donor is the Glu236.

This sequence belongs to the glycosyl hydrolase 43 family. Predicted to be exported by the Tat system. The position of the signal peptide cleavage has been experimentally proven.

Its subcellular location is the secreted. It catalyses the reaction Hydrolysis of terminal non-reducing alpha-L-arabinofuranoside residues in alpha-L-arabinosides.. It functions in the pathway glycan metabolism; L-arabinan degradation. Involved in the degradation of arabinan and is a key enzyme in the complete degradation of the plant cell wall. Catalyzes only the cleavage of terminal alpha-(1-&gt;5) arabinofuranosyl bonds of arabinan present in the arabinofuranosyl polysaccharides or oligosaccharides. It cannot act on other arabinose-containing polysaccharides and arabinoxylo-oligosaccharides. The sequence is that of Extracellular exo-alpha-(1-&gt;5)-L-arabinofuranosidase from Streptomyces chartreusis.